The chain runs to 188 residues: Acireductone dioxygenase (188 aa).

A disordered region spans residues 1-20 (MSRLRIFADSNPTTPHFDSR). Residues H97, H99, E103, and H141 each coordinate Fe(2+). Ni(2+) contacts are provided by H97, H99, E103, and H141.

Belongs to the acireductone dioxygenase (ARD) family. As to quaternary structure, monomer. The cofactor is Fe(2+). Ni(2+) serves as cofactor.

The enzyme catalyses 1,2-dihydroxy-5-(methylsulfanyl)pent-1-en-3-one + O2 = 3-(methylsulfanyl)propanoate + CO + formate + 2 H(+). It catalyses the reaction 1,2-dihydroxy-5-(methylsulfanyl)pent-1-en-3-one + O2 = 4-methylsulfanyl-2-oxobutanoate + formate + 2 H(+). It functions in the pathway amino-acid biosynthesis; L-methionine biosynthesis via salvage pathway; L-methionine from S-methyl-5-thio-alpha-D-ribose 1-phosphate: step 5/6. Functionally, catalyzes 2 different reactions between oxygen and the acireductone 1,2-dihydroxy-3-keto-5-methylthiopentene (DHK-MTPene) depending upon the metal bound in the active site. Fe-containing acireductone dioxygenase (Fe-ARD) produces formate and 2-keto-4-methylthiobutyrate (KMTB), the alpha-ketoacid precursor of methionine in the methionine recycle pathway. Ni-containing acireductone dioxygenase (Ni-ARD) produces methylthiopropionate, carbon monoxide and formate, and does not lie on the methionine recycle pathway. The protein is Acireductone dioxygenase of Xanthomonas campestris pv. campestris (strain 8004).